We begin with the raw amino-acid sequence, 154 residues long: Mating pheromone 2 (154 aa).

Positions 1 to 16 are cleaved as a signal peptide; the sequence is MKAIFIILAILMVTQA. A propeptide spanning residues 17–52 is cleaved from the precursor; sequence FKMTSKVNTKLQSQIQSKFQSKNKLASTFQTSSQLK.

It is found in the secreted. Its function is as follows. Mating ciliate pheromones (or gamones) are diffusible extracellular communication signals that distinguish different intraspecific classes of cells commonly referred to as 'mating types'. They prepare the latter for conjugation by changing their cell surface properties. In Euplotoides octocarinatus (Freshwater ciliate), this protein is Mating pheromone 2.